Reading from the N-terminus, the 460-residue chain is MPSLKSFSAAEEEDDQLGRNSEAERFNPEAVEKEEDPDKMDEKDESGDEEDDVKRDQVEAEDEEALGEEEDSKERSQSSSAGELSESEYMVVDLADICKDVQCSICLGIIRKTRTVMECLHRFCRECIDKSMRLGNNECPTCRKHCASRRSLRDDPNFDALIAALFKNIDKFEEEELNFRQDDEARNKQIQASIAQVSQRQSKALVKRKSVGKGTAILSRSRRSGGGSRRRRNCRNIEQDTSEANDDDDQNKRGKDSSSDEPCERQRKKRSATQPSSSNANNNDNCAGNGTEQTHQRDSRVISPVLVWNSELIAWGRGGTRSNTRQGNNNQGAISKRNARLKRLVEYLGSLEGNSVELDIHLKLVSLDTEGLLNLHEPYLCFRPTLLVKQLREYVARHLKLKAEEVELLVSKDGDTVIGNKTSTEKMQSLQDDETVAKLKVDCISSNGYMIVVYRRKQIA.

The segment at 1–85 (MPSLKSFSAA…SQSSSAGELS (85 aa)) is disordered. Basic and acidic residues predominate over residues 21–31 (SEAERFNPEAV). Acidic residues-rich tracts occupy residues 32–51 (EKEE…DEED) and 59–71 (EAED…EEED). An RING-type zinc finger spans residues 103–143 (CSICLGIIRKTRTVMECLHRFCRECIDKSMRLGNNECPTCR). Positions 196–300 (QVSQRQSKAL…TEQTHQRDSR (105 aa)) are disordered. Residues 220–234 (RSRRSGGGSRRRRNC) show a composition bias toward basic residues. A compositionally biased stretch (acidic residues) spans 240-249 (DTSEANDDDD). Over residues 250–265 (QNKRGKDSSSDEPCER) the composition is skewed to basic and acidic residues. The segment covering 276–290 (SSSNANNNDNCAGNG) has biased composition (low complexity).

Heterodimer with RING1A. Interacts with CLF. Component of the PRC1-like complex, at least composed of RING1A, RING1B and LHP1.

It is found in the nucleus. The enzyme catalyses S-ubiquitinyl-[E2 ubiquitin-conjugating enzyme]-L-cysteine + [acceptor protein]-L-lysine = [E2 ubiquitin-conjugating enzyme]-L-cysteine + N(6)-ubiquitinyl-[acceptor protein]-L-lysine.. It functions in the pathway protein modification; protein ubiquitination. In terms of biological role, putative E3 ubiquitin-protein ligase that mediates monoubiquitination of 'Lys-119' of histone H2A (H2AK119ub), thereby playing a central role in histone code and gene regulation. As part of the PRC1-like complex, repress class I KNOX gene expression. PcG PRC1 complex maintains the transcriptionally repressive state of many genes, including Hox genes, throughout development. PcG PRC1 complex acts via chromatin remodeling and modification of histones, rendering chromatin heritably changed in its expressibility. The protein is Putative E3 ubiquitin-protein ligase RING1b (RING1B) of Arabidopsis thaliana (Mouse-ear cress).